The following is a 107-amino-acid chain: Small ribosomal subunit protein uS17 (107 aa).

This sequence belongs to the universal ribosomal protein uS17 family. In terms of assembly, part of the 30S ribosomal subunit.

Functionally, one of the primary rRNA binding proteins, it binds specifically to the 5'-end of 16S ribosomal RNA. This Thermotoga sp. (strain RQ2) protein is Small ribosomal subunit protein uS17.